Here is a 253-residue protein sequence, read N- to C-terminus: Rab GTPase-activating protein 1-like, isoform 10 (253 aa).

Residues 8–222 are a coiled coil; that stretch reads SMTFEERENR…MNEIQAAKNS (215 aa). The interval 233–253 is disordered; sequence TATGTQPLQPAPVTQPPKEST.

This Homo sapiens (Human) protein is Rab GTPase-activating protein 1-like, isoform 10 (RABGAP1L).